Consider the following 966-residue polypeptide: General transcriptional corepressor CYC8 (966 aa).

Residues 1–37 (MNPGGEQTIMEQPAQQQQQQQQQQQQQQQQAAVPQQP) form a disordered region. Low complexity predominate over residues 12-36 (QPAQQQQQQQQQQQQQQQQAAVPQQ). TPR repeat units follow at residues 46-79 (AETW…NPSS), 80-113 (AKAL…NPEL), 114-147 (SDVW…LSNP), 150-183 (PKLW…DPHF), 187-220 (NEIY…PPAP), 224-257 (WDIW…NQHH), 262-295 (QQLG…DPSD), 296-329 (ATTW…DSRN), 330-363 (PIFW…NPYI), and 364-398 (SEVW…DVNN). Composition is skewed to polar residues over residues 412-429 (LENP…TNAS) and 439-489 (PTLQ…NGAS). 3 disordered regions span residues 412–489 (LENP…NGAS), 631–666 (TQAM…QAQA), and 699–723 (SSST…TQAP). S429 carries the post-translational modification Phosphoserine. Residues 467–682 (QQQHPAQQTP…HNVEQNVLPQ (216 aa)) form a prion domain (PrD) region. A Phosphothreonine modification is found at T475. Positions 637 to 666 (PQSSQLPPQQQQLQSVQHPQQLQGQPQAQA) are enriched in low complexity. Over residues 699–713 (SSSTHTENNTKSPRQ) the composition is skewed to polar residues. S710, S741, and S768 each carry phosphoserine. The span at 759 to 780 (NAKSEVSNQSPAVVESNTNNTS) shows a compositional bias: polar residues. Positions 759 to 966 (NAKSEVSNQS…QVEEDENYDD (208 aa)) are disordered. Low complexity predominate over residues 797 to 808 (AQEPPQEASPAE). Polar residues predominate over residues 814 to 823 (ASVSPSTKPL). 2 positions are modified to phosphoserine: S815 and S817. Residues 826–843 (EPESSSVQPTVSSESSTT) are compositionally biased toward low complexity. Residues 844–860 (KANDQSTAETIELSTAT) show a composition bias toward polar residues. S866 carries the phosphoserine modification. The segment covering 870–880 (DEVRQHSKEEN) has biased composition (basic and acidic residues). Positions 882 to 896 (TTEASAPSTEEAEPA) are enriched in low complexity. Basic and acidic residues-rich tracts occupy residues 897–906 (ASRDAEKQQD) and 924–936 (ETVK…REEE). A compositionally biased stretch (polar residues) spans 940–950 (QEKSPQENTLP). A Phosphoserine modification is found at S943.

Belongs to the CYC8/SSN6 family. As to quaternary structure, associates with TUP1 to form the CYC8-TUP1 (or TUP1-SSN6) corepressor complex that is composed of 4 copies of TUP1 and one copy of CYC8. Interacts with MATALPHA2, CTI6, MIG1, TUP1, SUT1, RFX1, PGD1, HOS1, HOS2 and RPD3.

It localises to the nucleus. Acts as a component of the CYC8-TUP1 corepressor complex which is involved in the repression of many genes in a wide variety of physiological processes including heme-regulated and catabolite repressed genes. May also be involved in the derepression of at least some target genes. The complex is recruited to target genes by interaction with DNA-bound transcriptional repressors, like MATALPHA2, MIG1, RFX1 and SKO1. The complex recruits histone deacetylases to produce a repressive chromatin structure, interacts with hypoacetylated N-terminal tails of histones H3 and H4 that have been programmed for repression by the action of histone deacetylases and interferes directly with the transcriptional machinery by associating with the RNA polymerase II mediator complex. The chain is General transcriptional corepressor CYC8 (CYC8) from Saccharomyces cerevisiae (strain ATCC 204508 / S288c) (Baker's yeast).